We begin with the raw amino-acid sequence, 472 residues long: Methylenetetrahydrofolate--tRNA-(uracil-5-)-methyltransferase TrmFO (472 aa).

FAD is bound at residue 10-15 (GGGLAG).

This sequence belongs to the MnmG family. TrmFO subfamily. The cofactor is FAD.

Its subcellular location is the cytoplasm. It catalyses the reaction uridine(54) in tRNA + (6R)-5,10-methylene-5,6,7,8-tetrahydrofolate + NADH + H(+) = 5-methyluridine(54) in tRNA + (6S)-5,6,7,8-tetrahydrofolate + NAD(+). It carries out the reaction uridine(54) in tRNA + (6R)-5,10-methylene-5,6,7,8-tetrahydrofolate + NADPH + H(+) = 5-methyluridine(54) in tRNA + (6S)-5,6,7,8-tetrahydrofolate + NADP(+). Its function is as follows. Catalyzes the folate-dependent formation of 5-methyl-uridine at position 54 (M-5-U54) in all tRNAs. This Mesorhizobium japonicum (strain LMG 29417 / CECT 9101 / MAFF 303099) (Mesorhizobium loti (strain MAFF 303099)) protein is Methylenetetrahydrofolate--tRNA-(uracil-5-)-methyltransferase TrmFO.